We begin with the raw amino-acid sequence, 524 residues long: REH2-associated factor 1 (524 aa).

The N-terminal 22 residues, 1–22 (MRRWLVASMAPQLHQLLQPVRR), are a transit peptide targeting the mitochondrion. Residues 48 to 70 (ASCPACSRVVHMCDMLTHLITAH) form a C2H2-type 1; atypical zinc finger. Residues 121-147 (YMCNWCDRRSDVYATRDKFLKHVADVH) form a C2H2-type 2; atypical zinc finger. Residues 226–249 (FPCELCNRTFNSEIDLLQHLETRH) form a C2H2-type 4 zinc finger. The segment at 286–312 (VICDLCVSSSKVYKMPSALFSHIRFKH) adopts a C2H2-type 3; atypical zinc-finger fold. C2H2-type zinc fingers lie at residues 334-357 (FVCT…NSKH), 376-399 (WWCH…QNKH), 406-429 (HPCP…SLQH), and 443-465 (VKCS…AVKH). The disordered stretch occupies residues 463–524 (VKHHKKDPRA…KTTEVSEVTS (62 aa)). Over residues 479–500 (APTSASHVAASTSAAVPSEVEA) the composition is skewed to low complexity.

In terms of assembly, component of the REH2-associated complex (REH2C) composed of helicase REH2, associated factors H2F1 and H2F2, and mRNAs at various editing stages; the formation of the complex is RNA-independent. Within the complex, interacts with REH2; the interaction is direct. Interacts with various editing complexes including the RNA editing core (RECC) complex, the gRNA-binding (GRBC) complex (also known as the MRB1 complex) and the RNA editing mediator (REMC) complex.

The protein localises to the mitochondrion. Its function is as follows. Plays an important role in mitochondrial mRNA editing by promoting the assembly of the mRNA editosome. Facilitates the recruitment of mRNA to the REH2C complex and promotes the interaction between various editing complexes including REH2C, GRBC, REMC and RECC complexes. In Trypanosoma brucei brucei (strain 927/4 GUTat10.1), this protein is REH2-associated factor 1.